The following is a 513-amino-acid chain: MNMTAFLLFLAIVGLTLIITYFAAKRTKTTSEFYTAGGGLTGVQNGLAIAGDYMSAASFLGIAGMIALYGFDGFFYSIGFLVAYLVVLYIVAEPLRNLGKYTMADMIAARFKEKKIRGVAALNTIAISTFYMIAQLVGAGALIKLLLGLDYTAAVLIVGVLMTIYVVFGGMIATSWVQIIKAVLLMAGTLVISIIVFSKFGFSLNTMFEQMKTATPLGADFLNPGNKYKVPLETLSLNLALVLGTAGLPHILIRFYTVKDAKTARTSVVSATWIIGVFYIMTVFLGFGAAAFVGFDAITAADQAGNMAAPLLAKALGGDFLFAFVSAIAFATILAVVTGLVLSAASAFAHDIYSQIIRKGEATEKEQMKAARWASVAVSVLSILLAIFAQSLNVAFLVALAFAVAASANLPLIVFTVFWKRFNASGALWGSLTGLISALVLVSMSPSVWDPAGGAIFTGDPLIPLSNPGIISIPLGFLGAWLGTVLSSDKTIDEDTFAEIQVKAHTGVHMEQE.

Transmembrane regions (helical) follow at residues 3–23 (MTAFLLFLAIVGLTLIITYFA), 47–67 (LAIAGDYMSAASFLGIAGMIA), 71–91 (FDGFFYSIGFLVAYLVVLYIV), 129–149 (TFYMIAQLVGAGALIKLLLGL), 153–173 (AAVLIVGVLMTIYVVFGGMIA), 177–197 (VQIIKAVLLMAGTLVISIIVF), 233–253 (ETLSLNLALVLGTAGLPHILI), 273–293 (WIIGVFYIMTVFLGFGAAAFV), 320–340 (FLFAFVSAIAFATILAVVTGL), 374–394 (ASVAVSVLSILLAIFAQSLNV), 395–415 (AFLVALAFAVAASANLPLIVF), 424–444 (ASGALWGSLTGLISALVLVSM), and 462–482 (LIPLSNPGIISIPLGFLGAWL).

This sequence belongs to the sodium:solute symporter (SSF) (TC 2.A.21) family.

It localises to the cell membrane. This is an uncharacterized protein from Bacillus subtilis (strain 168).